The following is a 210-amino-acid chain: Na(+)-translocating NADH-quinone reductase subunit D (210 aa).

Helical transmembrane passes span 11 to 31 (ILAPVLDNNPIALQVLGVCSA), 42 to 62 (FVMTLAVMFVTAFSNLFVSLI), 70 to 90 (VRIIVQMAIIASLVIVVDQIL), 103 to 123 (VFVGLIITNCIVMGRAEAFAM), 131 to 151 (FIDGIGNGLGYGFVLITVGFF), and 178 to 198 (NGLMLLAPSAFFLIGFMIWAI).

This sequence belongs to the NqrDE/RnfAE family. In terms of assembly, composed of six subunits; NqrA, NqrB, NqrC, NqrD, NqrE and NqrF.

It is found in the cell inner membrane. The catalysed reaction is a ubiquinone + n Na(+)(in) + NADH + H(+) = a ubiquinol + n Na(+)(out) + NAD(+). Functionally, NQR complex catalyzes the reduction of ubiquinone-1 to ubiquinol by two successive reactions, coupled with the transport of Na(+) ions from the cytoplasm to the periplasm. NqrA to NqrE are probably involved in the second step, the conversion of ubisemiquinone to ubiquinol. This Vibrio anguillarum (Listonella anguillarum) protein is Na(+)-translocating NADH-quinone reductase subunit D.